The primary structure comprises 362 residues: UDP-N-acetylglucosamine--N-acetylmuramyl-(pentapeptide) pyrophosphoryl-undecaprenol N-acetylglucosamine transferase (362 aa).

UDP-N-acetyl-alpha-D-glucosamine contacts are provided by residues 14 to 16 (TGG), Asn-126, Arg-166, Ser-193, and Gln-294.

Belongs to the glycosyltransferase 28 family. MurG subfamily.

It localises to the cell inner membrane. The enzyme catalyses di-trans,octa-cis-undecaprenyl diphospho-N-acetyl-alpha-D-muramoyl-L-alanyl-D-glutamyl-meso-2,6-diaminopimeloyl-D-alanyl-D-alanine + UDP-N-acetyl-alpha-D-glucosamine = di-trans,octa-cis-undecaprenyl diphospho-[N-acetyl-alpha-D-glucosaminyl-(1-&gt;4)]-N-acetyl-alpha-D-muramoyl-L-alanyl-D-glutamyl-meso-2,6-diaminopimeloyl-D-alanyl-D-alanine + UDP + H(+). It functions in the pathway cell wall biogenesis; peptidoglycan biosynthesis. Functionally, cell wall formation. Catalyzes the transfer of a GlcNAc subunit on undecaprenyl-pyrophosphoryl-MurNAc-pentapeptide (lipid intermediate I) to form undecaprenyl-pyrophosphoryl-MurNAc-(pentapeptide)GlcNAc (lipid intermediate II). This is UDP-N-acetylglucosamine--N-acetylmuramyl-(pentapeptide) pyrophosphoryl-undecaprenol N-acetylglucosamine transferase from Paracoccus denitrificans (strain Pd 1222).